The following is a 277-amino-acid chain: Digeranylgeranylglyceryl phosphate synthase (277 aa).

Transmembrane regions (helical) follow at residues 16-36 (ILAG…IPSI), 40-60 (GLVF…NDYF), 101-121 (FLGV…FIYA), 129-149 (FIGN…GALG), 153-173 (VGLA…REIM), 205-225 (IFGV…IGLG), and 257-277 (LKIA…TKGV).

The protein belongs to the UbiA prenyltransferase family. DGGGP synthase subfamily. Requires Mg(2+) as cofactor.

The protein localises to the cell membrane. The enzyme catalyses sn-3-O-(geranylgeranyl)glycerol 1-phosphate + (2E,6E,10E)-geranylgeranyl diphosphate = 2,3-bis-O-(geranylgeranyl)-sn-glycerol 1-phosphate + diphosphate. It functions in the pathway membrane lipid metabolism; glycerophospholipid metabolism. Prenyltransferase that catalyzes the transfer of the geranylgeranyl moiety of geranylgeranyl diphosphate (GGPP) to the C2 hydroxyl of (S)-3-O-geranylgeranylglyceryl phosphate (GGGP). This reaction is the second ether-bond-formation step in the biosynthesis of archaeal membrane lipids. The sequence is that of Digeranylgeranylglyceryl phosphate synthase from Pyrococcus abyssi (strain GE5 / Orsay).